A 116-amino-acid chain; its full sequence is Endoribonuclease EndoA (116 aa).

Belongs to the PemK/MazF family. As to quaternary structure, homodimer. Forms a complex with antitoxin EndoAI in which the toxin activity is inhibited. One dimer binds a ssRNA substrate, forms a heterohexamer composed of alternating toxin and antitoxin homodimers which inhibits the endoribonuclease activity. Antitoxin prevents RNA binding to the endoribonuclease.

Functionally, toxic component of a type II toxin-antitoxin (TA) system. Specific for 5'-UACAU-3' sequences, cleaving after the first U. Yields cleavage products with 3' phosphate and 5' hydroxyl groups. Cannot digest substrate with a UUdUACAUAA cleavage site. Overexpression is toxic for cell growth (shown in E.coli), probably by inhibiting protein synthesis through the cleavage of single-stranded RNA. The toxicity is reversed by the antitoxin EndoAI. Toxin activity cannot be inhibited by MazE from E.coli. The EndoA-EndoAI complex does not seem to bind its own promoter. The protein is Endoribonuclease EndoA of Bacillus subtilis (strain 168).